The chain runs to 436 residues: GTPase Der (436 aa).

2 consecutive EngA-type G domains span residues Pro4–Glu167 and Ile176–Ser351. Residues Gly10–Ser17, Asp57–Ile61, Asn119–Asp122, Gly182–Ser189, Asp229–Met233, and Asn294–Asp297 each bind GTP. The KH-like domain maps to Ile352–Asp436.

It belongs to the TRAFAC class TrmE-Era-EngA-EngB-Septin-like GTPase superfamily. EngA (Der) GTPase family. In terms of assembly, associates with the 50S ribosomal subunit.

Functionally, GTPase that plays an essential role in the late steps of ribosome biogenesis. This is GTPase Der from Bacillus mycoides (strain KBAB4) (Bacillus weihenstephanensis).